Consider the following 304-residue polypeptide: Cell surface-binding protein OPG105 (304 aa).

An Alpha-carbonic anhydrase domain is found at 1–235 (MPQQLSPINI…NDDTQVYYSG (235 aa)). The Virion surface portion of the chain corresponds to 1–275 (MPQQLSPINI…YQKYIEGNKT (275 aa)). Residues 276-294 (FAIIAIVFVFILTAILFLM) form a helical membrane-spanning segment. Over 295-304 (SRRYSREKQN) the chain is Intravirion.

Belongs to the alpha-carbonic anhydrase family. In terms of assembly, homodimer; disulfide-linked. Post-translationally, apparently non-glycosylated.

It localises to the virion membrane. In terms of biological role, binds to chondroitin sulfate on the cell surface to provide virion attachment to target cell. The polypeptide is Cell surface-binding protein OPG105 (OPG105) (Vaccinia virus (strain Copenhagen) (VACV)).